An 87-amino-acid chain; its full sequence is Cell division topological specificity factor (87 aa).

The protein belongs to the MinE family.

Its function is as follows. Prevents the cell division inhibition by proteins MinC and MinD at internal division sites while permitting inhibition at polar sites. This ensures cell division at the proper site by restricting the formation of a division septum at the midpoint of the long axis of the cell. This Neisseria gonorrhoeae (strain ATCC 700825 / FA 1090) protein is Cell division topological specificity factor.